The sequence spans 187 residues: Peptide deformylase (187 aa).

Fe cation-binding residues include cysteine 96 and histidine 138. The active site involves glutamate 139. Histidine 142 is a Fe cation binding site.

Belongs to the polypeptide deformylase family. Requires Fe(2+) as cofactor.

The catalysed reaction is N-terminal N-formyl-L-methionyl-[peptide] + H2O = N-terminal L-methionyl-[peptide] + formate. Its function is as follows. Removes the formyl group from the N-terminal Met of newly synthesized proteins. Requires at least a dipeptide for an efficient rate of reaction. N-terminal L-methionine is a prerequisite for activity but the enzyme has broad specificity at other positions. The protein is Peptide deformylase of Brachyspira hyodysenteriae (strain ATCC 49526 / WA1).